The chain runs to 1325 residues: Sperm-specific sodium:proton exchanger (1325 aa).

An N-terminal signal peptide occupies residues 1-29 (MKKRVVKLRELVPAVAALAVAVLIQSATG). Residues 28–68 (TGSSGGSGHTPTTQATHADDHDLTTHNGTEEHDDGHDDGHD) form a disordered region. Residues 30–76 (SSGGSGHTPTTQATHADDHDLTTHNGTEEHDDGHDDGHDDLHAHAPK) lie on the Extracellular side of the membrane. Over residues 44–68 (HADDHDLTTHNGTEEHDDGHDDGHD) the composition is skewed to basic and acidic residues. Histidine 73 serves as a coordination point for a 1,2-diacylglycero-3-phosphate. A helical transmembrane segment spans residues 77 to 96 (VIVFISGSCLFGAISRSLFK). At 97–101 (KLPIP) the chain is on the cytoplasmic side. Residues 102–119 (YTVVLLILGAILGVVASN) traverse the membrane as a helical segment. At 120 to 135 (VPLVEEHTRDVAHMDP) the chain is on the extracellular side. A helical membrane pass occupies residues 136–152 (HVLLQIFLPVLIFESAF). Residues 153 to 162 (AMDVHTFMRS) are Cytoplasmic-facing. A helical transmembrane segment spans residues 163–188 (FSQVCILALFGLVVASVLTAVLAMNL). The tract at residues 163 to 250 (FSQVCILALF…AIVIFNVFMK (88 aa)) is transport core domain. Topologically, residues 189 to 194 (FNYNWN) are extracellular. Residues 195–220 (FSEAMMFGAIMSATDPVAVVALLKDL) traverse the membrane as a helical segment. The Cytoplasmic portion of the chain corresponds to 221–223 (GAS). A helical membrane pass occupies residues 224 to 249 (KQLGTIIEGESLLNDGCAIVIFNVFM). Residues 237-238 (ND) carry the Essential for sodium:proton exchange motif. Topologically, residues 250–260 (KMVFFPQLTST) are extracellular. The helical transmembrane segment at 261–292 (VGQNVLYFLQVAVAGPLWGYAVAKVTVFFLSH) threads the bilayer. Residues 293-296 (IFND) lie on the Cytoplasmic side of the membrane. Residues 297-319 (ALVEITITLAATYLTYYIGDIWL) form a helical membrane-spanning segment. Over 320–322 (EVS) the chain is Extracellular. Residues 323–336 (GVLAVVVLGLIVNA) form a helical membrane-spanning segment. At 337–343 (EKTSISP) the chain is on the cytoplasmic side. The helical transmembrane segment at 344–377 (EVEVFLHRFWEMLAYLANTLIFMMVGVVVTQKAL) threads the bilayer. At 378–382 (VAVDK) the chain is on the extracellular side. Residues 383–412 (MDWFYLIILYLAITIIRGMVISLFSPILSR) traverse the membrane as a helical segment. Positions 383-481 (MDWFYLIILY…TTIQTLLRIL (99 aa)) are transport core domain. Residues 413-418 (IGYGLT) are Cytoplasmic-facing. Residues 419-446 (WRNAVIMTWGGLRGAVGLALALVVENLA) traverse the membrane as a helical segment. At 447 to 450 (GNDV) the chain is on the extracellular side. The chain crosses the membrane as a helical span at residues 451–481 (IGSKFLFHTAGIVVLTLVINATTIQTLLRIL). Over 482-677 (GMSDISIPKR…GKLMYKICHH (196 aa)) the chain is Cytoplasmic. Residues 575–620 (FADMMEEARLRMLKAEKISYWKQFEHGMLAREALRLLVQHAEVAAD) are interacts with the S4 segment of voltage sensor domain. Positions 605-620 (REALRLLVQHAEVAAD) are interacts with the transport core domain; can lock the transporter in the inward conformation. Residues 678-708 (MAFEVTINIAIVLNIVPIIMEFVVQDKMASV) form a helical membrane-spanning segment. Topologically, residues 709 to 724 (STMAAPGSTVSSEPSS) are extracellular. The helical transmembrane segment at 725–752 (LQKIEDALRISNYVFFVIYAIEAIVKIL) threads the bilayer. The Cytoplasmic portion of the chain corresponds to 753 to 760 (GLGRHYIV). The helical transmembrane segment at 761 to 784 (SHWNKFDAFILVVALVDIIIAETL) threads the bilayer. The Extracellular portion of the chain corresponds to 785 to 795 (LKGSITINLSS). A helical transmembrane segment spans residues 796–822 (IKVVKLFRLLRGLRMLRLTKALIPKLI). The tract at residues 796–857 (IKVVKLFRLL…EEVGKIIDRM (62 aa)) is S4 segment of voltage sensor domain. Over 823–1325 (LVVNGKINNQ…EEGAAPRVNV (503 aa)) the chain is Cytoplasmic. An interacts with the S4 segment of voltage sensor domain region spans residues 860–919 (NKKILRELKHISETGRLQVVKELGLLQREHPGIAVSVKTRQAIRTILNHSRETIHELQGA). Residues 968–1068 (KLIDFIKARA…CETTVQVYFI (101 aa)) form a cNMP-binding domain region. Glycine 1043 is a binding site for 3',5'-cyclic AMP. Glycine 1043, glutamate 1044, and methionine 1045 together coordinate 3',5'-cyclic GMP. 4 residues coordinate 3',5'-cyclic AMP: methionine 1045, glycine 1046, arginine 1053, and asparagine 1054. 2 residues coordinate 3',5'-cyclic GMP: arginine 1053 and asparagine 1054. The interval 1237–1325 (MLSRKSSGAA…EEGAAPRVNV (89 aa)) is disordered. Residues 1266 to 1280 (VSPSVPTKTTPKPKS) are compositionally biased toward low complexity.

It belongs to the monovalent cation:proton antiporter 1 (CPA1) transporter (TC 2.A.36) family. In terms of assembly, homodimer; the dimerization is stabilized in the presence of phosphatidic acids.

The protein localises to the cell projection. It is found in the cilium. Its subcellular location is the flagellum membrane. It carries out the reaction Na(+)(in) + H(+)(out) = Na(+)(out) + H(+)(in). Its activity is regulated as follows. Gated by voltage and stimulated by cyclic nucleotides which shift the activation voltage closer to resting membrane potential. Not inhibited by common sodium:proton exchanger inhibitors such as amiloride. In terms of biological role, electroneutral sodium:proton antiporter that regulates intracellular pH of sperm along with capacitation and fertility. Activated in response to egg-derived chemoattractants, couples membrane voltage to sodium:proton exchange and transduces membrane hyperpolarization to cytoplasmic alkalization to cAMP signaling and ultimately to sperm motility. In Strongylocentrotus purpuratus (Purple sea urchin), this protein is Sperm-specific sodium:proton exchanger.